Consider the following 201-residue polypeptide: Small ribosomal subunit protein uS4c (201 aa).

A disordered region spans residues 17-36 (ALPGLTRKTPKSGSNLKKKF). An S4 RNA-binding domain is found at 89-157 (MRLDNILFRL…VQNYIASSDP (69 aa)).

The protein belongs to the universal ribosomal protein uS4 family. In terms of assembly, part of the 30S ribosomal subunit. Contacts protein S5. The interaction surface between S4 and S5 is involved in control of translational fidelity.

It is found in the plastid. Its subcellular location is the chloroplast. Its function is as follows. One of the primary rRNA binding proteins, it binds directly to 16S rRNA where it nucleates assembly of the body of the 30S subunit. With S5 and S12 plays an important role in translational accuracy. The protein is Small ribosomal subunit protein uS4c (rps4) of Agrostis stolonifera (Creeping bentgrass).